A 303-amino-acid polypeptide reads, in one-letter code: Nucleotide-binding protein SAR0820 (303 aa).

18–25 (GLSGAGKS) serves as a coordination point for ATP. 69-72 (DLRG) provides a ligand contact to GTP.

The protein belongs to the RapZ-like family.

Functionally, displays ATPase and GTPase activities. The chain is Nucleotide-binding protein SAR0820 from Staphylococcus aureus (strain MRSA252).